A 416-amino-acid polypeptide reads, in one-letter code: 2,3-bisphosphoglycerate-independent phosphoglycerate mutase (416 aa).

This sequence belongs to the BPG-independent phosphoglycerate mutase family. A-PGAM subfamily.

It catalyses the reaction (2R)-2-phosphoglycerate = (2R)-3-phosphoglycerate. The protein operates within carbohydrate degradation; glycolysis; pyruvate from D-glyceraldehyde 3-phosphate: step 3/5. Its function is as follows. Catalyzes the interconversion of 2-phosphoglycerate and 3-phosphoglycerate. The polypeptide is 2,3-bisphosphoglycerate-independent phosphoglycerate mutase (Ignicoccus hospitalis (strain KIN4/I / DSM 18386 / JCM 14125)).